Here is a 235-residue protein sequence, read N- to C-terminus: 7-cyano-7-deazaguanine synthase (235 aa).

16 to 26 (FSGGQDSTTCL) contacts ATP. Residues Cys193, Cys201, Cys204, and Cys207 each coordinate Zn(2+).

Belongs to the QueC family. Zn(2+) serves as cofactor.

The catalysed reaction is 7-carboxy-7-deazaguanine + NH4(+) + ATP = 7-cyano-7-deazaguanine + ADP + phosphate + H2O + H(+). It functions in the pathway purine metabolism; 7-cyano-7-deazaguanine biosynthesis. Its function is as follows. Catalyzes the ATP-dependent conversion of 7-carboxy-7-deazaguanine (CDG) to 7-cyano-7-deazaguanine (preQ(0)). In Actinobacillus succinogenes (strain ATCC 55618 / DSM 22257 / CCUG 43843 / 130Z), this protein is 7-cyano-7-deazaguanine synthase.